Reading from the N-terminus, the 398-residue chain is 1-deoxy-D-xylulose 5-phosphate reductoisomerase (398 aa).

NADPH-binding residues include threonine 11, glycine 12, serine 13, isoleucine 14, and asparagine 125. Lysine 126 provides a ligand contact to 1-deoxy-D-xylulose 5-phosphate. Glutamate 127 serves as a coordination point for NADPH. Aspartate 151 provides a ligand contact to Mn(2+). The 1-deoxy-D-xylulose 5-phosphate site is built by serine 152, glutamate 153, serine 186, and histidine 209. Position 153 (glutamate 153) interacts with Mn(2+). Glycine 215 lines the NADPH pocket. 1-deoxy-D-xylulose 5-phosphate-binding residues include serine 222, asparagine 227, lysine 228, and glutamate 231. Residue glutamate 231 participates in Mn(2+) binding.

This sequence belongs to the DXR family. Requires Mg(2+) as cofactor. Mn(2+) serves as cofactor.

The enzyme catalyses 2-C-methyl-D-erythritol 4-phosphate + NADP(+) = 1-deoxy-D-xylulose 5-phosphate + NADPH + H(+). Its pathway is isoprenoid biosynthesis; isopentenyl diphosphate biosynthesis via DXP pathway; isopentenyl diphosphate from 1-deoxy-D-xylulose 5-phosphate: step 1/6. Catalyzes the NADPH-dependent rearrangement and reduction of 1-deoxy-D-xylulose-5-phosphate (DXP) to 2-C-methyl-D-erythritol 4-phosphate (MEP). The chain is 1-deoxy-D-xylulose 5-phosphate reductoisomerase from Acinetobacter baumannii (strain ACICU).